The sequence spans 350 residues: Protein RecA (350 aa).

Residue 68–75 (GPESSGKT) coordinates ATP.

Belongs to the RecA family.

It localises to the cytoplasm. In terms of biological role, can catalyze the hydrolysis of ATP in the presence of single-stranded DNA, the ATP-dependent uptake of single-stranded DNA by duplex DNA, and the ATP-dependent hybridization of homologous single-stranded DNAs. It interacts with LexA causing its activation and leading to its autocatalytic cleavage. The protein is Protein RecA of Mycolicibacterium gilvum (strain PYR-GCK) (Mycobacterium gilvum (strain PYR-GCK)).